The following is a 268-amino-acid chain: Ethylene-responsive transcription factor ERN1 (268 aa).

Polar residues predominate over residues 1-21 (MEIQFQQPNMQNQKAGISVTN). The disordered stretch occupies residues 1-36 (MEIQFQQPNMQNQKAGISVTNKGGKFKGRNRNSNNT). Positions 38 to 95 (KFVGVRQRPSGRWVAEIKDTTQKIRMWLGTFETAEEAARAYDEAACLLRGSNTRTNFI) form a DNA-binding region, AP2/ERF. The segment at 114 to 154 (NRKGDKKQEDGAVASAPSNSKTTISNTSTITSNDDNKESTL) is disordered. Residues 131–146 (SNSKTTISNTSTITSN) are compositionally biased toward low complexity.

Belongs to the AP2/ERF transcription factor family. ERF subfamily. Expressed in roots, root hairs and leaves. Expressed in root epidermis and root hairs.

It localises to the nucleus. Its function is as follows. Transcription factor involved in symbiotic nodule signaling in response to rhizobial Nod factors (NFs). Binds to the GCC-box (NF-responsive box) of ENOD11 promoter. Acts as a transcriptional activator of NF-responsive box-containing target gene promoters in root hairs. Functions as a transcriptional regulator required for root infection by symbiotic rhizobia, infection thread (IT) formation and maintenance, and nodule development. Necessary for NF-induced gene expression and spontaneous nodulation activated by CCAMK. Functions downstream of CCAMK to activate nodulation gene expression. Involved in early stages of root nodule development. Functions redundantly with ERN2. Is essential with ERN2 for the initiation of root hair infection, and nodule organogenesis and development. Required for accurate expression of the NF signaling genes ENOD11 and ENOD12. In Medicago truncatula (Barrel medic), this protein is Ethylene-responsive transcription factor ERN1.